Consider the following 154-residue polypeptide: Crossover junction endodeoxyribonuclease RuvC (154 aa).

Active-site residues include Asp7, Glu66, and Asp139. Mg(2+) is bound by residues Asp7, Glu66, and Asp139.

The protein belongs to the RuvC family. In terms of assembly, homodimer which binds Holliday junction (HJ) DNA. The HJ becomes 2-fold symmetrical on binding to RuvC with unstacked arms; it has a different conformation from HJ DNA in complex with RuvA. In the full resolvosome a probable DNA-RuvA(4)-RuvB(12)-RuvC(2) complex forms which resolves the HJ. It depends on Mg(2+) as a cofactor.

It is found in the cytoplasm. The enzyme catalyses Endonucleolytic cleavage at a junction such as a reciprocal single-stranded crossover between two homologous DNA duplexes (Holliday junction).. In terms of biological role, the RuvA-RuvB-RuvC complex processes Holliday junction (HJ) DNA during genetic recombination and DNA repair. Endonuclease that resolves HJ intermediates. Cleaves cruciform DNA by making single-stranded nicks across the HJ at symmetrical positions within the homologous arms, yielding a 5'-phosphate and a 3'-hydroxyl group; requires a central core of homology in the junction. The consensus cleavage sequence is 5'-(A/T)TT(C/G)-3'. Cleavage occurs on the 3'-side of the TT dinucleotide at the point of strand exchange. HJ branch migration catalyzed by RuvA-RuvB allows RuvC to scan DNA until it finds its consensus sequence, where it cleaves and resolves the cruciform DNA. In Aliarcobacter butzleri (strain RM4018) (Arcobacter butzleri), this protein is Crossover junction endodeoxyribonuclease RuvC.